Here is a 323-residue protein sequence, read N- to C-terminus: Transmembrane protein 171 (323 aa).

4 helical membrane-spanning segments follow: residues 22–42 (IFFLFVFGAVLLCVGVLISIF), 57–77 (MVLKIAGPSCAVMGLGTVILA), 112–132 (LIFGFLFLTSGMLISILGIWV), and 159–179 (FLSLQIMGPLIVLVGLCFFVV). Over residues 251 to 268 (YSSLFNLSRTPTPENQGA) the composition is skewed to polar residues. Residues 251–323 (YSSLFNLSRT…LGAPSESSPP (73 aa)) are disordered. Low complexity predominate over residues 281–290 (SGPGSSSESS).

The protein resides in the membrane. The chain is Transmembrane protein 171 (Tmem171) from Rattus norvegicus (Rat).